A 442-amino-acid chain; its full sequence is Microfibrillar-associated protein 1 (442 aa).

Disordered stretches follow at residues 1-34 and 113-203; these read MSAP…YGEG and EVVS…PRLK. Acidic residues-rich tracts occupy residues 134 to 148 and 181 to 198; these read DTSE…DEEI and ESEL…EDEM.

Belongs to the MFAP1 family. In terms of assembly, component of the spliceosome B complex. Interacts with PRPF38A (via N-terminal interaction domain). In terms of tissue distribution, widely expressed.

Its subcellular location is the nucleus. In terms of biological role, involved in pre-mRNA splicing as a component of the spliceosome. This is Microfibrillar-associated protein 1 from Gallus gallus (Chicken).